A 186-amino-acid polypeptide reads, in one-letter code: MSIADIKKTFEQKSARSIESFKSELQKIRTGRAHPGILDQVHVEYYGSMVSISQVANVSLLDARTISVQPWEKGMGPKIEKAIRESDLGLNPSSQGELLRVPMPALNEERRRDLTKVVRGAGEDARIAVRNLRRDANDQAKKLLKDKAISEDDERRSLDEVQKLTDRVIAEIDRLVQSKEAEILAV.

Belongs to the RRF family.

It is found in the cytoplasm. In terms of biological role, responsible for the release of ribosomes from messenger RNA at the termination of protein biosynthesis. May increase the efficiency of translation by recycling ribosomes from one round of translation to another. This Methylibium petroleiphilum (strain ATCC BAA-1232 / LMG 22953 / PM1) protein is Ribosome-recycling factor.